The following is a 429-amino-acid chain: Transcription factor IIIA (429 aa).

The disordered stretch occupies residues 1 to 45 (MGGEVLNNEGMPLAELKQETIPISRSESSESLNSLTSTRSSSSNR). A compositionally biased stretch (low complexity) spans 24–44 (SRSESSESLNSLTSTRSSSSN). 9 consecutive C2H2-type zinc fingers follow at residues 49 to 74 (YFCD…LSVH), 80 to 102 (FQCD…LYTH), 108 to 130 (FQCS…EVTH), 134 to 159 (FICP…LSVH), 163 to 186 (LTCP…SKHH), 194 to 219 (YQCT…KNDH), 222 to 244 (LKCP…MIIH), 253 to 277 (WKCH…GSIH), and 365 to 389 (YRCF…IDKH). Residues 406 to 416 (KTLVDQNHKEP) show a composition bias toward basic and acidic residues. The segment at 406 to 429 (KTLVDQNHKEPFIIQKETQSAGDK) is disordered.

It is found in the nucleus. In terms of biological role, interacts with the internal control region (ICR) of approximately 50 bases within the 5S RNA genes, is required for correct transcription of these genes by RNA polymerase III. Also binds the transcribed 5S RNA's. The protein is Transcription factor IIIA (PZF1) of Saccharomyces cerevisiae (strain ATCC 204508 / S288c) (Baker's yeast).